Consider the following 149-residue polypeptide: Transcriptional repressor NrdR (149 aa).

A zinc finger spans residues cysteine 3–cysteine 34. Residues proline 49–glutamate 139 enclose the ATP-cone domain.

The protein belongs to the NrdR family. Requires Zn(2+) as cofactor.

Negatively regulates transcription of bacterial ribonucleotide reductase nrd genes and operons by binding to NrdR-boxes. In Klebsiella pneumoniae (strain 342), this protein is Transcriptional repressor NrdR.